The chain runs to 517 residues: NADH-quinone oxidoreductase subunit N (517 aa).

Transmembrane regions (helical) follow at residues leucine 14 to valine 34, histidine 40 to valine 60, glycine 77 to isoleucine 97, alanine 131 to alanine 151, leucine 154 to leucine 174, tyrosine 189 to glycine 209, valine 238 to alanine 258, proline 272 to leucine 292, phenylalanine 306 to valine 326, leucine 334 to serine 354, methionine 362 to valine 382, phenylalanine 404 to glycine 424, serine 451 to glycine 471, and glycine 481 to valine 501.

It belongs to the complex I subunit 2 family. As to quaternary structure, NDH-1 is composed of 14 different subunits. Subunits NuoA, H, J, K, L, M, N constitute the membrane sector of the complex.

The protein resides in the cell membrane. It carries out the reaction a quinone + NADH + 5 H(+)(in) = a quinol + NAD(+) + 4 H(+)(out). Functionally, NDH-1 shuttles electrons from NADH, via FMN and iron-sulfur (Fe-S) centers, to quinones in the respiratory chain. The immediate electron acceptor for the enzyme in this species is believed to be a menaquinone. Couples the redox reaction to proton translocation (for every two electrons transferred, four hydrogen ions are translocated across the cytoplasmic membrane), and thus conserves the redox energy in a proton gradient. The protein is NADH-quinone oxidoreductase subunit N of Salinispora arenicola (strain CNS-205).